The primary structure comprises 207 residues: SPRY domain-containing protein 4 (207 aa).

One can recognise a B30.2/SPRY domain in the interval 12–207; it reads YRWGTKRWGV…HSGLEVPKGL (196 aa). N6-acetyllysine is present on residues Lys53 and Lys130. An N6-succinyllysine modification is found at Lys139.

In Mus musculus (Mouse), this protein is SPRY domain-containing protein 4 (Spryd4).